Here is a 384-residue protein sequence, read N- to C-terminus: MLYIPQFSIYFCLGYLLLFCKISNAVKQSWEINQELITEANKEHTVFGDMLLTPAQLIRYENSKDSDLSIRGVSIKGSSMNRWSNNIVPYVISPQYSPAQKQILVSSLRYFERVSCFKFVERTTQNDYLFIVPLDGCYSYVGKIGGRQTLSLAADCIADYIIWHEMMHAIGFEHEHQRPDRDSFIRVDYANVIPGQMINFDKLKTSHVEYPDIYDFKSIMHYDGYAFGRVDTARRVRLATMTPLKPGVTLEDNMKFTATDIEKLNRLGQCGARGGQYSNQGVVASTCQDVATAVSCEGNRRRGMCKNPFYKQMMIKSCQKTCRLCSYTRMIDEDDDLTPNTTVKSVKCEDKHPRCDIYSHNGFCTLPFYDDVRYQLCAKTCNLC.

Positions 1–25 (MLYIPQFSIYFCLGYLLLFCKISNA) are cleaved as a signal peptide. The Peptidase M12A domain occupies 73 to 271 (VSIKGSSMNR…EKLNRLGQCG (199 aa)). Disulfide bonds link Cys116-Cys270, Cys137-Cys156, Cys287-Cys325, Cys296-Cys318, and Cys305-Cys322. His164 lines the Zn(2+) pocket. Glu165 is an active-site residue. The Zn(2+) site is built by His168 and His174. Residues 287–325 (CQDVATAVSCEGNRRRGMCKNPFYKQMMIKSCQKTCRLC) form the ShKT 1 domain. A glycan (N-linked (GlcNAc...) asparagine) is linked at Asn340. Intrachain disulfides connect Cys348/Cys384, Cys355/Cys377, and Cys364/Cys381. Residues 348–384 (CEDKHPRCDIYSHNGFCTLPFYDDVRYQLCAKTCNLC) form the ShKT 2 domain.

The cofactor is Zn(2+). Expressed in pharyngeal glands.

Its subcellular location is the secreted. Its function is as follows. Metalloprotease. This is Zinc metalloproteinase nas-12 (nas-12) from Caenorhabditis elegans.